The following is a 421-amino-acid chain: Cyclin-A1 (421 aa).

The segment at 1 to 21 (MHRQSSKSGVALPPVGQGPDA) is disordered.

Belongs to the cyclin family. Cyclin AB subfamily. As to quaternary structure, interacts with INCA1 and KLHDC9. Interacts with the CDK2 and CDC2 protein kinases to form a serine/threonine kinase holoenzyme complex. The cyclin subunit imparts substrate specificity to the complex. Found in a complex with CDK2, CABLES1 and CCNE1. Post-translationally, polyubiquitinated via 'Lys-11'-linked ubiquitin by the anaphase-promoting complex (APC/C), leading to its degradation by the proteasome. Deubiquitinated and stabilized by USP37 enables entry into S phase. Ubiquitinated during the G1 phase by the SCF(FBXO31) complex, leading to its proteasomal degradation. In terms of tissue distribution, testis and ovaries.

It localises to the nucleus. Its subcellular location is the cytoplasm. It is found in the cytoskeleton. The protein localises to the spindle. May be involved in the control of the cell cycle at the G1/S (start) and G2/M (mitosis) transitions. May primarily function in the control of the germline meiotic cell cycle and additionally in the control of mitotic cell cycle in some somatic cells. The polypeptide is Cyclin-A1 (Ccna1) (Mus musculus (Mouse)).